The primary structure comprises 393 residues: Argininosuccinate synthase (393 aa).

ATP-binding positions include 7–15 (AYSGGLDTS) and alanine 34. The L-citrulline site is built by tyrosine 85 and serine 90. Glycine 115 is a binding site for ATP. L-aspartate is bound by residues threonine 117, asparagine 121, and aspartate 122. L-citrulline is bound at residue asparagine 121. L-citrulline contacts are provided by arginine 125, serine 176, serine 185, glutamate 261, and tyrosine 273.

The protein belongs to the argininosuccinate synthase family. Type 1 subfamily. In terms of assembly, homotetramer.

Its subcellular location is the cytoplasm. It catalyses the reaction L-citrulline + L-aspartate + ATP = 2-(N(omega)-L-arginino)succinate + AMP + diphosphate + H(+). Its pathway is amino-acid biosynthesis; L-arginine biosynthesis; L-arginine from L-ornithine and carbamoyl phosphate: step 2/3. In Ehrlichia canis (strain Jake), this protein is Argininosuccinate synthase.